The following is a 123-amino-acid chain: Small ribosomal subunit protein uS12 (123 aa).

Residues 1–29 (MPTINQLVRKGREPQKAKSKVPAMEQNPQ) form a disordered region. Asp89 carries the 3-methylthioaspartic acid modification.

The protein belongs to the universal ribosomal protein uS12 family. In terms of assembly, part of the 30S ribosomal subunit. Contacts proteins S8 and S17. May interact with IF1 in the 30S initiation complex.

With S4 and S5 plays an important role in translational accuracy. Functionally, interacts with and stabilizes bases of the 16S rRNA that are involved in tRNA selection in the A site and with the mRNA backbone. Located at the interface of the 30S and 50S subunits, it traverses the body of the 30S subunit contacting proteins on the other side and probably holding the rRNA structure together. The combined cluster of proteins S8, S12 and S17 appears to hold together the shoulder and platform of the 30S subunit. This is Small ribosomal subunit protein uS12 from Novosphingobium aromaticivorans (strain ATCC 700278 / DSM 12444 / CCUG 56034 / CIP 105152 / NBRC 16084 / F199).